The following is a 405-amino-acid chain: Argininosuccinate synthase (405 aa).

Residue 12 to 20 (AYSGGLDTS) coordinates ATP. Residues Y92 and S97 each coordinate L-citrulline. G122 is a binding site for ATP. L-aspartate contacts are provided by T124, N128, and D129. L-citrulline is bound at residue N128. L-citrulline is bound by residues R132, S181, S190, E266, and Y278.

Belongs to the argininosuccinate synthase family. Type 1 subfamily. Homotetramer.

The protein resides in the cytoplasm. The enzyme catalyses L-citrulline + L-aspartate + ATP = 2-(N(omega)-L-arginino)succinate + AMP + diphosphate + H(+). It functions in the pathway amino-acid biosynthesis; L-arginine biosynthesis; L-arginine from L-ornithine and carbamoyl phosphate: step 2/3. The protein is Argininosuccinate synthase of Cronobacter sakazakii (strain ATCC BAA-894) (Enterobacter sakazakii).